The sequence spans 356 residues: Phosphate acyltransferase (356 aa).

It belongs to the PlsX family. Homodimer. Probably interacts with PlsY.

It localises to the cytoplasm. It carries out the reaction a fatty acyl-[ACP] + phosphate = an acyl phosphate + holo-[ACP]. Its pathway is lipid metabolism; phospholipid metabolism. In terms of biological role, catalyzes the reversible formation of acyl-phosphate (acyl-PO(4)) from acyl-[acyl-carrier-protein] (acyl-ACP). This enzyme utilizes acyl-ACP as fatty acyl donor, but not acyl-CoA. The sequence is that of Phosphate acyltransferase from Escherichia coli (strain K12 / DH10B).